We begin with the raw amino-acid sequence, 398 residues long: Ureide permease 2 (398 aa).

At 1 to 10 (MYLVESKGGA) the chain is on the extracellular side. The chain crosses the membrane as a helical span at residues 11–31 (IACMLLALLSLGTWPAVLTLL). Over 32–44 (ERRGRLPQHTYLD) the chain is Cytoplasmic. A helical transmembrane segment spans residues 45–65 (YSITNLLAAIIIAFTFGQIGS). Over 66 to 81 (TKPDSPNFITQLAQDN) the chain is Extracellular. A helical transmembrane segment spans residues 82 to 102 (WPSVMFAMAGGIVLSLGNLST). At 103–104 (QY) the chain is on the cytoplasmic side. Residues 105–125 (AWALVGLSVTEVITSSITVVI) traverse the membrane as a helical segment. Residues 126 to 139 (GSTLNYFLDDKINK) lie on the Extracellular side of the membrane. A helical transmembrane segment spans residues 140-160 (AEILFPGVACFLIAVCLGSAV). Residues 161 to 229 (HRSNADDNKA…RAIKVFGKRK (69 aa)) are Cytoplasmic-facing. Residues 176–200 (ETAKQEASGPSTEIGTNSSKDLETN) are disordered. The span at 183 to 200 (SGPSTEIGTNSSKDLETN) shows a compositional bias: polar residues. 221–228 (AIKVFGKR) is an ATP binding site. A helical membrane pass occupies residues 230-250 (IIGLAITFFAGLCFSLFSPAF). The Extracellular segment spans residues 251–272 (NLATNDQWNRLKQGVPKLVVYT). The helical transmembrane segment at 273 to 293 (AFFYFSVSCFIIALILNVVFL) threads the bilayer. At 294–315 (YYPVLGLPKSSFKAYLNDWNGR) the chain is on the cytoplasmic side. Residues 316–336 (YWAFLAGFLCGFGNGLQFMGG) traverse the membrane as a helical segment. Residues 337–341 (QAAGY) lie on the Extracellular side of the membrane. Residues 342–362 (AAADSVQALPLVSTFWGVVLF) form a helical membrane-spanning segment. The Cytoplasmic portion of the chain corresponds to 363 to 371 (GEYRRSSRK). The chain crosses the membrane as a helical span at residues 372-392 (TYLLLFCMLFMFISAVAVLMA). The Extracellular segment spans residues 393-398 (SSGHRK).

It belongs to the plant ureide permease (TC 2.A.7.19) family. As to expression, expressed in root xylem, cotyledons and leaves. Expressed in leaf blades, petioles, trichomes, stems, flower stigma, the upper part of pedicels, sepals, and the top and bottom parts of carpels in siliques.

Its subcellular location is the membrane. In terms of biological role, proton-coupled transporter that transports a wide spectrum of oxo derivatives of heterocyclic nitrogen compounds, including allantoin, uric acid and xanthine, but not adenine. Mediates high affinity transport of uracil and 5-fluorouracil (a toxic uracil analog). Mediates transport of free pyrimidines and may function during early seedling development in salvage pathways, by the utilization of pyrimidines from seed storage tissue. This is Ureide permease 2 from Arabidopsis thaliana (Mouse-ear cress).